Reading from the N-terminus, the 303-residue chain is Sulfotransferase 6B1 (303 aa).

65-70 contacts 3'-phosphoadenylyl sulfate; it reads KCGSNW. H118 functions as the Proton acceptor in the catalytic mechanism. 3'-phosphoadenylyl sulfate-binding positions include R140, S148, Y203, 237-242, and 259-261; these read STFQAM and RKG.

This sequence belongs to the sulfotransferase 1 family.

It localises to the cytoplasm. The protein resides in the cytosol. It carries out the reaction thyroxine + 3'-phosphoadenylyl sulfate = thyroxine sulfate + adenosine 3',5'-bisphosphate + H(+). Functionally, sulfotransferase that utilizes 3'-phospho-5'-adenylyl sulfate (PAPS) as sulfonate donor to catalyze the sulfate conjugation of thyroxine. Involved in the metabolism of thyroxine. This Gorilla gorilla gorilla (Western lowland gorilla) protein is Sulfotransferase 6B1 (SULT6B1).